A 177-amino-acid chain; its full sequence is ATP synthase subunit delta (177 aa).

The protein belongs to the ATPase delta chain family. F-type ATPases have 2 components, F(1) - the catalytic core - and F(0) - the membrane proton channel. F(1) has five subunits: alpha(3), beta(3), gamma(1), delta(1), epsilon(1). F(0) has three main subunits: a(1), b(2) and c(10-14). The alpha and beta chains form an alternating ring which encloses part of the gamma chain. F(1) is attached to F(0) by a central stalk formed by the gamma and epsilon chains, while a peripheral stalk is formed by the delta and b chains.

It localises to the cell membrane. In terms of biological role, f(1)F(0) ATP synthase produces ATP from ADP in the presence of a proton or sodium gradient. F-type ATPases consist of two structural domains, F(1) containing the extramembraneous catalytic core and F(0) containing the membrane proton channel, linked together by a central stalk and a peripheral stalk. During catalysis, ATP synthesis in the catalytic domain of F(1) is coupled via a rotary mechanism of the central stalk subunits to proton translocation. Its function is as follows. This protein is part of the stalk that links CF(0) to CF(1). It either transmits conformational changes from CF(0) to CF(1) or is implicated in proton conduction. The chain is ATP synthase subunit delta from Carboxydothermus hydrogenoformans (strain ATCC BAA-161 / DSM 6008 / Z-2901).